The sequence spans 107 residues: Small ribosomal subunit protein eS25 (107 aa).

The disordered stretch occupies residues 1–35 (MPPKQQLSKAAKAAAAMAGGKKSKKKWSKKSHKDK). Over residues 8-20 (SKAAKAAAAMAGG) the composition is skewed to low complexity. Residues 21 to 35 (KKSKKKWSKKSHKDK) are compositionally biased toward basic residues.

The protein belongs to the eukaryotic ribosomal protein eS25 family.

This Candida glabrata (strain ATCC 2001 / BCRC 20586 / JCM 3761 / NBRC 0622 / NRRL Y-65 / CBS 138) (Yeast) protein is Small ribosomal subunit protein eS25 (RPS25).